A 439-amino-acid polypeptide reads, in one-letter code: Innexin-19 (439 aa).

4 helical membrane passes run Pro33–Ile53, Gln103–Trp123, Ile199–Leu219, and Val285–Ile305.

The protein belongs to the pannexin family.

It is found in the cell membrane. Its subcellular location is the cell junction. The protein localises to the gap junction. Its function is as follows. Structural component of the gap junctions that specifically coordinates left-right asymmetry in the developing nervous system. Acts by forming gap junction network linking embryonic neurons and providing electrical coupling between cells, leading to promote or inhibit AWC signaling. In Caenorhabditis briggsae, this protein is Innexin-19 (inx-19).